We begin with the raw amino-acid sequence, 478 residues long: PRAME family member 4 (478 aa).

The LRR 1; degenerate repeat unit spans residues 99–126 (RWKLQVLDLQDVCENFWMVWSEAMAHGC). Residues 181–205 (HLCCKKLKILGMPFRNIRSILKMVN) form an LRR 2; degenerate repeat. One copy of the LRR 3; degenerate repeat lies at 206–232 (LDCIQEVEVNCKWVLPILTQFTPYLGH). One copy of the LRR 4; degenerate repeat lies at 233 to 268 (MRNLQKLILSHMDVSRYVSPEQKKEIVTQFTTQFLK). LRR repeat units follow at residues 269 to 294 (LRCL…LSCL), 295 to 326 (KTSL…SQLK), 327 to 347 (TLDL…QILL), 351 to 378 (AATL…ALSR), and 379 to 403 (CFEL…LLSH).

Belongs to the PRAME family.

The chain is PRAME family member 4 from Homo sapiens (Human).